Reading from the N-terminus, the 61-residue chain is Small ribosomal subunit protein uS14B (61 aa).

Zn(2+) is bound by residues Cys-24, Cys-27, Cys-40, and Cys-43.

Belongs to the universal ribosomal protein uS14 family. Zinc-binding uS14 subfamily. As to quaternary structure, part of the 30S ribosomal subunit. Contacts proteins S3 and S10. Zn(2+) is required as a cofactor.

Binds 16S rRNA, required for the assembly of 30S particles and may also be responsible for determining the conformation of the 16S rRNA at the A site. The chain is Small ribosomal subunit protein uS14B from Pediococcus pentosaceus (strain ATCC 25745 / CCUG 21536 / LMG 10740 / 183-1w).